The primary structure comprises 208 residues: Ribonuclease HII (208 aa).

Positions Pro-5 to Arg-198 constitute an RNase H type-2 domain. A divalent metal cation-binding residues include Asp-11, Glu-12, and Asp-106.

Belongs to the RNase HII family. Requires Mn(2+) as cofactor. Mg(2+) is required as a cofactor.

Its subcellular location is the cytoplasm. The enzyme catalyses Endonucleolytic cleavage to 5'-phosphomonoester.. In terms of biological role, endonuclease that specifically degrades the RNA of RNA-DNA hybrids. The sequence is that of Ribonuclease HII from Microcystis aeruginosa (strain NIES-843 / IAM M-2473).